We begin with the raw amino-acid sequence, 566 residues long: Cyclin-dependent kinase-like 2 (566 aa).

Residues 4 to 287 form the Protein kinase domain; sequence YENLGLVGEG…CAELLHHDFF (284 aa). Residues 10–18 and Lys33 each bind ATP; that span reads VGEGSYGMV. Positions 45-51 match the [NKR]KIAxRE motif; it reads KKIAMRE. Asp126 functions as the Proton acceptor in the catalytic mechanism. Disordered stretches follow at residues 307 to 334 and 545 to 566; these read DARNISLSKKSQNRKKEKEKDDSLGEER and QVSGSPLSDGSEADSPWMEHQH. Positions 320 to 334 are enriched in basic and acidic residues; sequence RKKEKEKDDSLGEER.

This sequence belongs to the protein kinase superfamily. CMGC Ser/Thr protein kinase family. CDC2/CDKX subfamily.

The protein resides in the cytoplasm. It is found in the nucleus. The catalysed reaction is L-seryl-[protein] + ATP = O-phospho-L-seryl-[protein] + ADP + H(+). The enzyme catalyses L-threonyl-[protein] + ATP = O-phospho-L-threonyl-[protein] + ADP + H(+). This Oryctolagus cuniculus (Rabbit) protein is Cyclin-dependent kinase-like 2.